A 202-amino-acid polypeptide reads, in one-letter code: FMN reductase (NADH) RutF 1 (202 aa).

The segment at Pro168–Ala202 is disordered. Low complexity predominate over residues Pro171–Ala196.

This sequence belongs to the non-flavoprotein flavin reductase family. RutF subfamily.

The enzyme catalyses FMNH2 + NAD(+) = FMN + NADH + 2 H(+). Its function is as follows. Catalyzes the reduction of FMN to FMNH2 which is used to reduce pyrimidine by RutA via the Rut pathway. The protein is FMN reductase (NADH) RutF 1 of Methylorubrum extorquens (strain PA1) (Methylobacterium extorquens).